A 149-amino-acid polypeptide reads, in one-letter code: Cell division protein SepF (149 aa).

It belongs to the SepF family. Homodimer. Interacts with FtsZ.

Its subcellular location is the cytoplasm. Functionally, cell division protein that is part of the divisome complex and is recruited early to the Z-ring. Probably stimulates Z-ring formation, perhaps through the cross-linking of FtsZ protofilaments. Its function overlaps with FtsA. This is Cell division protein SepF from Clostridium perfringens (strain ATCC 13124 / DSM 756 / JCM 1290 / NCIMB 6125 / NCTC 8237 / Type A).